The sequence spans 163 residues: Cyclic pyranopterin monophosphate synthase (163 aa).

Substrate-binding positions include Leu78–His80 and Met116–Glu117. The active site involves Asp131.

Belongs to the MoaC family. As to quaternary structure, homohexamer; trimer of dimers.

It catalyses the reaction (8S)-3',8-cyclo-7,8-dihydroguanosine 5'-triphosphate = cyclic pyranopterin phosphate + diphosphate. It participates in cofactor biosynthesis; molybdopterin biosynthesis. Its function is as follows. Catalyzes the conversion of (8S)-3',8-cyclo-7,8-dihydroguanosine 5'-triphosphate to cyclic pyranopterin monophosphate (cPMP). In Agrobacterium fabrum (strain C58 / ATCC 33970) (Agrobacterium tumefaciens (strain C58)), this protein is Cyclic pyranopterin monophosphate synthase.